A 544-amino-acid chain; its full sequence is Nucleosome assembly protein 1-like 3 (544 aa).

Disordered stretches follow at residues 1–109 and 168–345; these read MAEA…LFLD and PTEE…KKED. A compositionally biased stretch (low complexity) spans 35 to 83; it reads SNSSSSTNSCSSSGSSSSGSSSSSSSSSSSSSSSSSSSSGSSGSSSNGS. Over residues 168–192 the composition is skewed to acidic residues; the sequence is PTEEECEWNSEEEFSGDEEMQDDTP. 3 stretches are compositionally biased toward basic and acidic residues: residues 207–228, 235–277, and 314–332; these read CNEKAEVKEEGTHVPEEVPEAK, PKET…KADS, and PAREAQKRVPETRPEEGVN.

The protein belongs to the nucleosome assembly protein (NAP) family. As to expression, expressed in brain.

The protein localises to the nucleus. It is found in the cytoplasm. This Mus musculus (Mouse) protein is Nucleosome assembly protein 1-like 3 (Nap1l3).